The following is a 134-amino-acid chain: Kinetochore-binding protein 3 (134 aa).

The protein localises to the nucleus. The protein resides in the chromosome. Its subcellular location is the centromere. It localises to the kinetochore. This chain is Kinetochore-binding protein 3 (kbp-3), found in Caenorhabditis elegans.